We begin with the raw amino-acid sequence, 415 residues long: Beta-1,4-glucuronyltransferase 1 (415 aa).

Residues 1-8 lie on the Cytoplasmic side of the membrane; it reads MQMSYAIR. A helical; Signal-anchor for type II membrane protein transmembrane segment spans residues 9–36; sequence CAFYQLLLAALMLVAMLQLLYLSLLSGL. At 37-415 the chain is on the lumenal side; the sequence is HGQEEQDQYF…AKYPNSPRRC (379 aa). N204 carries N-linked (GlcNAc...) asparagine glycosylation. Mn(2+)-binding residues include D227 and D229. An N-linked (GlcNAc...) asparagine glycan is attached at N300.

This sequence belongs to the glycosyltransferase 49 family. In terms of assembly, interacts with LARGE1 and LARGE2. Mn(2+) serves as cofactor. In terms of tissue distribution, in the adult, highly expressed in heart, brain, skeletal muscle and kidney and to a lesser extent in placenta, pancreas, spleen, prostate, testis, ovary, small intestine and colon. Very weak expression in lung, liver, thymus and peripheral blood leukocytes. In fetal highly expressed in brain and kidney and to a lesser extent in lung and liver.

The protein localises to the golgi apparatus membrane. The enzyme catalyses 3-O-[beta-D-Xyl-(1-&gt;4)-Rib-ol-P-Rib-ol-P-3-beta-D-GalNAc-(1-&gt;3)-beta-D-GlcNAc-(1-&gt;4)-(O-6-P-alpha-D-Man)]-Thr-[protein] + UDP-alpha-D-glucuronate = 3-O-[beta-D-GlcA-(1-&gt;3)-beta-D-Xyl-(1-&gt;4)-Rib-ol-P-Rib-ol-P-3-beta-D-GalNAc-(1-&gt;3)-beta-D-GlcNAc-(1-&gt;4)-(O-6-P-alpha-D-Man)]-Thr-[protein] + UDP + H(+). The protein operates within protein modification; protein glycosylation. Functionally, beta-1,4-glucuronyltransferase involved in O-mannosylation of alpha-dystroglycan (DAG1). Transfers a glucuronic acid (GlcA) residue onto a xylose (Xyl) acceptor to produce the glucuronyl-beta-1,4-xylose-beta disaccharide primer, which is further elongated by LARGE1, during synthesis of phosphorylated O-mannosyl glycan. Phosphorylated O-mannosyl glycan is a carbohydrate structure present in alpha-dystroglycan (DAG1), which is required for binding laminin G-like domain-containing extracellular proteins with high affinity. Required for axon guidance; via its function in O-mannosylation of alpha-dystroglycan (DAG1). In Homo sapiens (Human), this protein is Beta-1,4-glucuronyltransferase 1.